We begin with the raw amino-acid sequence, 294 residues long: Glyceraldehyde-3-phosphate dehydrogenase (294 aa).

NAD(+) is bound by residues aspartate 19, arginine 63, and threonine 105. Residues 134-136 (SCT), threonine 165, 194-195 (TG), and arginine 217 contribute to the D-glyceraldehyde 3-phosphate site. Catalysis depends on cysteine 135, which acts as the Nucleophile.

Belongs to the glyceraldehyde-3-phosphate dehydrogenase family. Homotetramer.

It is found in the cytoplasm. It carries out the reaction D-glyceraldehyde 3-phosphate + phosphate + NAD(+) = (2R)-3-phospho-glyceroyl phosphate + NADH + H(+). It participates in carbohydrate degradation; glycolysis; pyruvate from D-glyceraldehyde 3-phosphate: step 1/5. Functionally, catalyzes the oxidative phosphorylation of glyceraldehyde 3-phosphate (G3P) to 1,3-bisphosphoglycerate (BPG) using the cofactor NAD. The first reaction step involves the formation of a hemiacetal intermediate between G3P and a cysteine residue, and this hemiacetal intermediate is then oxidized to a thioester, with concomitant reduction of NAD to NADH. The reduced NADH is then exchanged with the second NAD, and the thioester is attacked by a nucleophilic inorganic phosphate to produce BPG. The sequence is that of Glyceraldehyde-3-phosphate dehydrogenase (gap) from Shimwellia blattae (Escherichia blattae).